The following is a 328-amino-acid chain: UPF0421 protein SAUSA300_1870 (328 aa).

The next 4 membrane-spanning stretches (helical) occupy residues 19–39 (IAIF…IYAI), 61–81 (LPAT…FGDQ), 108–128 (VAVL…IFNF), and 132–152 (TLTA…VFPP).

It belongs to the UPF0421 family.

The protein localises to the cell membrane. In Staphylococcus aureus (strain USA300), this protein is UPF0421 protein SAUSA300_1870.